The following is a 203-amino-acid chain: Ribosomal RNA large subunit methyltransferase E (203 aa).

S-adenosyl-L-methionine is bound by residues G59, W61, D79, D97, and D119. The active-site Proton acceptor is the K159.

It belongs to the class I-like SAM-binding methyltransferase superfamily. RNA methyltransferase RlmE family.

The protein localises to the cytoplasm. The catalysed reaction is uridine(2552) in 23S rRNA + S-adenosyl-L-methionine = 2'-O-methyluridine(2552) in 23S rRNA + S-adenosyl-L-homocysteine + H(+). Its function is as follows. Specifically methylates the uridine in position 2552 of 23S rRNA at the 2'-O position of the ribose in the fully assembled 50S ribosomal subunit. In Desulforapulum autotrophicum (strain ATCC 43914 / DSM 3382 / VKM B-1955 / HRM2) (Desulfobacterium autotrophicum), this protein is Ribosomal RNA large subunit methyltransferase E.